We begin with the raw amino-acid sequence, 251 residues long: tRNA (guanine-N(1)-)-methyltransferase (251 aa).

Residues Gly113 and Ile133 to Leu138 each bind S-adenosyl-L-methionine.

The protein belongs to the RNA methyltransferase TrmD family. Homodimer.

Its subcellular location is the cytoplasm. The enzyme catalyses guanosine(37) in tRNA + S-adenosyl-L-methionine = N(1)-methylguanosine(37) in tRNA + S-adenosyl-L-homocysteine + H(+). Functionally, specifically methylates guanosine-37 in various tRNAs. This is tRNA (guanine-N(1)-)-methyltransferase from Methylococcus capsulatus (strain ATCC 33009 / NCIMB 11132 / Bath).